The following is a 20-amino-acid chain: VIGGDICNINEHNFLVALYE.

Belongs to the peptidase S1 family. Snake venom subfamily. As to quaternary structure, monomer. In terms of tissue distribution, expressed by the venom gland.

The protein resides in the secreted. Strongly inhibited by PMSF and moderately inhibited by leupeptin. Not inhibited by EDTA, aprotinin, pepstatin, and bestatin. Functionally, thrombin-like snake venom serine protease that coagulates human plasma and bovine fibrinogen by hydrolysis of the alpha chains (FGA) (minimum coagulation dose is 60 ug on fibrinogen). Has fibrinogenolytic activities, and degrades preferentially the Aalpha chain (FGA). Shows amidolytic activity toward N-benzoyl-L-Arg-p-nitroanilide, has a higher activity than Cdc SI. In vivo, intravenous injection induces defibrin(ogen)ation and a loss of the righting reflex and opisthotoxins, together with a typical gyroxin-like effect (18-20 minutes). Subcutaneous injection into the footpads induces moderate edema. Potentiates local hemorrhagic activity induced by metalloproteinases (BaP1). The polypeptide is Thrombin-like enzyme Cdc SII (Crotalus durissus cumanensis (South American rattlesnake)).